We begin with the raw amino-acid sequence, 356 residues long: Tyrosine recombinase XerS (356 aa).

The 106-residue stretch at 16–121 (LMPWYVLEYY…ALSSLYKYLT (106 aa)) folds into the Core-binding (CB) domain. In terms of domain architecture, Tyr recombinase spans 169–354 (GFLTYIDQEH…VSDEQKNALD (186 aa)). Active-site residues include R210, K234, H306, R309, and H332. Residue Y341 is the O-(3'-phospho-DNA)-tyrosine intermediate of the active site.

The protein belongs to the 'phage' integrase family. XerS subfamily.

The protein resides in the cytoplasm. FtsK is required for recombination. Functionally, site-specific tyrosine recombinase, which acts by catalyzing the cutting and rejoining of the recombining DNA molecules. Essential to convert dimers of the bacterial chromosome into monomers to permit their segregation at cell division. This Streptococcus pneumoniae serotype 4 (strain ATCC BAA-334 / TIGR4) protein is Tyrosine recombinase XerS.